The sequence spans 512 residues: Glutamyl-tRNA(Gln) amidotransferase subunit A (512 aa).

Residues K82 and S157 each act as charge relay system in the active site. Catalysis depends on S181, which acts as the Acyl-ester intermediate.

This sequence belongs to the amidase family. GatA subfamily. In terms of assembly, heterotrimer of A, B and C subunits.

The enzyme catalyses L-glutamyl-tRNA(Gln) + L-glutamine + ATP + H2O = L-glutaminyl-tRNA(Gln) + L-glutamate + ADP + phosphate + H(+). In terms of biological role, allows the formation of correctly charged Gln-tRNA(Gln) through the transamidation of misacylated Glu-tRNA(Gln) in organisms which lack glutaminyl-tRNA synthetase. The reaction takes place in the presence of glutamine and ATP through an activated gamma-phospho-Glu-tRNA(Gln). In Bordetella bronchiseptica (strain ATCC BAA-588 / NCTC 13252 / RB50) (Alcaligenes bronchisepticus), this protein is Glutamyl-tRNA(Gln) amidotransferase subunit A.